We begin with the raw amino-acid sequence, 179 residues long: ATP synthase subunit delta (179 aa).

The protein belongs to the ATPase delta chain family. F-type ATPases have 2 components, F(1) - the catalytic core - and F(0) - the membrane proton channel. F(1) has five subunits: alpha(3), beta(3), gamma(1), delta(1), epsilon(1). F(0) has three main subunits: a(1), b(2) and c(10-14). The alpha and beta chains form an alternating ring which encloses part of the gamma chain. F(1) is attached to F(0) by a central stalk formed by the gamma and epsilon chains, while a peripheral stalk is formed by the delta and b chains.

It localises to the cell inner membrane. F(1)F(0) ATP synthase produces ATP from ADP in the presence of a proton or sodium gradient. F-type ATPases consist of two structural domains, F(1) containing the extramembraneous catalytic core and F(0) containing the membrane proton channel, linked together by a central stalk and a peripheral stalk. During catalysis, ATP synthesis in the catalytic domain of F(1) is coupled via a rotary mechanism of the central stalk subunits to proton translocation. Its function is as follows. This protein is part of the stalk that links CF(0) to CF(1). It either transmits conformational changes from CF(0) to CF(1) or is implicated in proton conduction. The polypeptide is ATP synthase subunit delta (Acidithiobacillus ferridurans).